Here is a 99-residue protein sequence, read N- to C-terminus: Putative protein adenylyltransferase MJ0141 (99 aa).

The GSX(10)DXD motif signature appears at glycine 29 to aspartate 43. Mg(2+) contacts are provided by aspartate 41 and aspartate 43.

This sequence belongs to the MntA antitoxin family. It depends on Mg(2+) as a cofactor.

The catalysed reaction is L-tyrosyl-[protein] + ATP = O-(5'-adenylyl)-L-tyrosyl-[protein] + diphosphate. It carries out the reaction O-(5'-adenylyl)-L-tyrosyl-[protein] + ATP = O-[5'-(adenylyl-(5'-&gt;3')-adenylyl)]-L-tyrosyl-[protein] + diphosphate. Its function is as follows. Putative antitoxin component of a putative type VII toxin-antitoxin (TA) system. Its cognate toxin might be MF0142, which it might AMPylate. The chain is Putative protein adenylyltransferase MJ0141 from Methanocaldococcus jannaschii (strain ATCC 43067 / DSM 2661 / JAL-1 / JCM 10045 / NBRC 100440) (Methanococcus jannaschii).